A 180-amino-acid chain; its full sequence is MGNQHSLLNKEQLEQMKDNSSFSEAELKKLYRRFQMLDKDGSGTLTTDEFLSIPDLALNPLLERVIQIFDQNKDNEIEFFEFVGTLATLSHKGTKEDKLKFLFQIYDIDCDGFISNGELFQVLKMMVGTNLNDVQLQQIVDKTIIEGDYDKDGKISFDEFIHMIGNQEGIEEKLSVNWSE.

A lipid anchor (N-myristoyl glycine) is attached at Gly2. 4 EF-hand domains span residues 25 to 60, 62 to 92, 94 to 129, and 135 to 170; these read AELKKLYRRFQMLDKDGSGTLTTDEFLSIPDLALNP, LERVIQIFDQNKDNEIEFFEFVGTLATLSHK, TKEDKLKFLFQIYDIDCDGFISNGELFQVLKMMVGT, and QLQQIVDKTIIEGDYDKDGKISFDEFIHMIGNQEGI. Asp38, Asp40, Ser42, Thr44, Glu49, Asp70, Asn72, Asp74, Glu76, Glu81, Asp107, Asp109, Asp111, and Glu118 together coordinate Ca(2+). Residues 138 to 143 are canA/calcineurin A binding; the sequence is QIVDKT. Ca(2+)-binding residues include Asp148, Asp150, Asp152, Lys154, and Glu159.

It belongs to the calcineurin regulatory subunit family. In terms of assembly, forms a complex composed of a calmodulin-dependent catalytic subunit canA (also known as calcineurin A) and a regulatory Ca(2+)-binding subunit cnbA (also known as calcineurin B).

Regulatory subunit of calcineurin, a calcium-dependent, calmodulin stimulated protein phosphatase. Confers calcium sensitivity. Important for stalk formation. This Dictyostelium discoideum (Social amoeba) protein is Calcineurin subunit B type 1 (cnbA).